Here is a 245-residue protein sequence, read N- to C-terminus: Lytic switch protein BZLF1 (245 aa).

The interval 1–167 (MMDPNSTSED…RTRKPLQPES (167 aa)) is transactivation. Phosphothreonine occurs at positions 14 and 159. Residues 145-167 (GAPQPAPAAAPARRTRKPLQPES) are disordered. The Bipartite nuclear localization signal motif lies at 157–194 (RRTRKPLQPESLEECDSELEIKRYKNRVASRKCRAKFK). Residues S167, S173, and S186 each carry the phosphoserine modification. Residues 178–195 (KRYKNRVASRKCRAKFKH) form a basic motif region. Residues 178–228 (KRYKNRVASRKCRAKFKHLLQHYREVASAKSSENDRLRLLLKQMCPSLDVD) enclose the bZIP domain. Residues 196–228 (LLQHYREVASAKSSENDRLRLLLKQMCPSLDVD) form a leucine-zipper region. Residues 229-245 (SIIPRTPDVLHEDLLNF) form an accessory activation domain region.

This sequence belongs to the bZIP family. Homodimer. Interacts (via b-ZIP domain) with the DNA polymerase processivity factor BMRF1 (via N-terminus); this interaction may inhibit BZLF1-induced transcription of the BMRF1 promoter. Interacts with human UBN1, CRTC2 and RACK1. Interacts (via N-terminus) with human PAX5 (via N-terminus); this interaction inhibits BZLF1-mediated lytic viral reactivation. Interacts (via leucine-zipper domain) with host CEBPA; this interaction induces G1 host cell cycle arrest. Interacts (via C-terminus) with host TP53BP1 (via C-terminus); this interaction is involved in the activation of the viral lytic cycle. Interacts with host chromatin-remodeling ATPase INO80; this interaction participates to the activation of early lytic viral genes by BZLF1. Interacts with host regulator of chromatin SMARCA5/hSNF2H; this interaction participates to the activation of early lytic viral genes by BZLF1. Interacts with host PLSCR1/Phospholipid scramblase 1; this interaction negatively regulates the transcriptional regulatory activity of BZLF1 by preventing the formation of the BZLF1-CBP complex.

It is found in the host nucleus. Transcription factor that acts as a molecular switch to induce the transition from the latent to the lytic or productive phase of the virus cycle. Mediates the switch from the latent to the lytic cycle of infection in cells containing a highly methylated viral genome. Probably binds to silenced chromatin and recruits host chromatin-remodeling enzymes. Regulates this switch by binding to 2 types of ZEBRA response elements (ZREs): the CpG-free AP-1 like elements (latency) and the methylated CpG-containing elements (lytic replication). Activates preferentially the methylated forms of the viral lytic R (BRLF1) and Na (BRRF1) gene promoters, the latters being the first genes activated during Z-mediated reactivation in latently infected cells. BZLF1 and BRLF1 act together to trigger lytic replication. Also binds the lytic origin of replication, oriLyt. Induces G1 cell cycle arrest by stabilizing the host CCAAT/enhancer binding protein CEBPA. This function is important because the lytic cycle preferentially takes place in host cells arrested in G1. This Homo sapiens (Human) protein is Lytic switch protein BZLF1.